The primary structure comprises 109 residues: Nucleoid-associated protein BCE_0021 (109 aa).

Belongs to the YbaB/EbfC family. In terms of assembly, homodimer.

Its subcellular location is the cytoplasm. It is found in the nucleoid. Its function is as follows. Binds to DNA and alters its conformation. May be involved in regulation of gene expression, nucleoid organization and DNA protection. This is Nucleoid-associated protein BCE_0021 from Bacillus cereus (strain ATCC 10987 / NRS 248).